The sequence spans 447 residues: 3-phosphoshikimate 1-carboxyvinyltransferase (447 aa).

Residues 1-22 are disordered; the sequence is MTPSLKRLSGAMRARPAPALSG. K30, S31, and R35 together coordinate 3-phosphoshikimate. Position 30 (K30) interacts with phosphoenolpyruvate. Positions 102 and 130 each coordinate phosphoenolpyruvate. 4 residues coordinate 3-phosphoshikimate: S173, Q175, D325, and K352. Phosphoenolpyruvate is bound at residue Q175. Residue D325 is the Proton acceptor of the active site. R356 and R401 together coordinate phosphoenolpyruvate.

It belongs to the EPSP synthase family. In terms of assembly, monomer.

It is found in the cytoplasm. The catalysed reaction is 3-phosphoshikimate + phosphoenolpyruvate = 5-O-(1-carboxyvinyl)-3-phosphoshikimate + phosphate. It functions in the pathway metabolic intermediate biosynthesis; chorismate biosynthesis; chorismate from D-erythrose 4-phosphate and phosphoenolpyruvate: step 6/7. Catalyzes the transfer of the enolpyruvyl moiety of phosphoenolpyruvate (PEP) to the 5-hydroxyl of shikimate-3-phosphate (S3P) to produce enolpyruvyl shikimate-3-phosphate and inorganic phosphate. This Maricaulis maris (strain MCS10) (Caulobacter maris) protein is 3-phosphoshikimate 1-carboxyvinyltransferase.